A 251-amino-acid chain; its full sequence is Triosephosphate isomerase (251 aa).

9-11 (NWK) contributes to the substrate binding site. H95 functions as the Electrophile in the catalytic mechanism. E167 serves as the catalytic Proton acceptor. Residues G173, S213, and 234–235 (GG) contribute to the substrate site. The residue at position 213 (S213) is a Phosphoserine.

It belongs to the triosephosphate isomerase family. In terms of assembly, homodimer.

The protein localises to the cytoplasm. The catalysed reaction is D-glyceraldehyde 3-phosphate = dihydroxyacetone phosphate. It functions in the pathway carbohydrate biosynthesis; gluconeogenesis. It participates in carbohydrate degradation; glycolysis; D-glyceraldehyde 3-phosphate from glycerone phosphate: step 1/1. Functionally, involved in the gluconeogenesis. Catalyzes stereospecifically the conversion of dihydroxyacetone phosphate (DHAP) to D-glyceraldehyde-3-phosphate (G3P). This Bacillus cereus (strain ATCC 10987 / NRS 248) protein is Triosephosphate isomerase.